Consider the following 475-residue polypeptide: Tesmin (475 aa).

Residues S34 and S67 each carry the phosphoserine modification. In terms of domain architecture, CRC spans 263–372; it reads SGPALQGPPK…KCIACKNYEE (110 aa).

This sequence belongs to the lin-54 family.

It is found in the cytoplasm. Its subcellular location is the nucleus. Functionally, may have a role in spermatogenesis. The sequence is that of Tesmin from Rattus norvegicus (Rat).